A 109-amino-acid chain; its full sequence is U-scoloptoxin(16)-Ssd1a (109 aa).

A signal peptide spans 1 to 23 (MTTSATVIIMVLCVGSLVIFSEG).

Contains 4 disulfide bonds. In terms of tissue distribution, expressed by the venom gland.

It is found in the secreted. This Scolopendra dehaani (Thai centipede) protein is U-scoloptoxin(16)-Ssd1a.